Consider the following 524-residue polypeptide: Anthranilate synthase component 1 (524 aa).

Over residues 1–16 (MQTTANHSSRSTQTGT) the composition is skewed to polar residues. Residues 1 to 25 (MQTTANHSSRSTQTGTRAHGAALAE) form a disordered region. L-tryptophan-binding positions include serine 74 and 298–300 (PYM). Chorismate is bound at residue 339–340 (GT). An Isoglutamyl lysine isopeptide (Lys-Gln) (interchain with Q-Cter in protein Pup) cross-link involves residue lysine 355. Glutamate 366 contacts Mg(2+). Chorismate contacts are provided by residues tyrosine 454, arginine 474, 488-490 (GGG), and glycine 490. A Mg(2+)-binding site is contributed by glutamate 503.

It belongs to the anthranilate synthase component I family. In terms of assembly, heterotetramer consisting of two non-identical subunits: a beta subunit (TrpG) and a large alpha subunit (TrpE). Mg(2+) is required as a cofactor.

It catalyses the reaction chorismate + L-glutamine = anthranilate + pyruvate + L-glutamate + H(+). It participates in amino-acid biosynthesis; L-tryptophan biosynthesis; L-tryptophan from chorismate: step 1/5. With respect to regulation, feedback inhibited by tryptophan. In terms of biological role, part of a heterotetrameric complex that catalyzes the two-step biosynthesis of anthranilate, an intermediate in the biosynthesis of L-tryptophan. In the first step, the glutamine-binding beta subunit (TrpG) of anthranilate synthase (AS) provides the glutamine amidotransferase activity which generates ammonia as a substrate that, along with chorismate, is used in the second step, catalyzed by the large alpha subunit of AS (TrpE) to produce anthranilate. In the absence of TrpG, TrpE can synthesize anthranilate directly from chorismate and high concentrations of ammonia. The sequence is that of Anthranilate synthase component 1 (trpE) from Mycolicibacterium smegmatis (strain ATCC 700084 / mc(2)155) (Mycobacterium smegmatis).